The following is a 395-amino-acid chain: MGSCFSSRVKADIFHNGKSSDLYGLSLSSRKSSSTVAAAQKTEGEILSSTPVKSFTFNELKLATRNFRPDSVIGEGGFGCVFKGWLDESTLTPTKPGTGLVIAVKKLNQEGFQGHREWLTEINYLGQLSHPNLVKLIGYCLEDEHRLLVYEFMQKGSLENHLFRRGAYFKPLPWFLRVNVALDAAKGLAFLHSDPVKVIYRDIKASNILLDADYNAKLSDFGLARDGPMGDLSYVSTRVMGTYGYAAPEYMSSGHLNARSDVYSFGVLLLEILSGKRALDHNRPAKEENLVDWARPYLTSKRKVLLIVDNRLDTQYLPEEAVRMASVAVQCLSFEPKSRPTMDQVVRALQQLQDNLGKPSQTNPVKDTKKLGFKTGTTKSSEKRFTQKPFGRHLV.

The N-myristoyl glycine moiety is linked to residue G2. The S-palmitoyl cysteine moiety is linked to residue C4. S26 is modified (phosphoserine). K31 is covalently cross-linked (Glycyl lysine isopeptide (Lys-Gly) (interchain with G-Cter in ubiquitin)). Phosphoserine is present on residues S32, S33, and S34. T35 carries the post-translational modification Phosphothreonine. A Glycyl lysine isopeptide (Lys-Gly) (interchain with G-Cter in ubiquitin) cross-link involves residue K41. Residue T42 is modified to Phosphothreonine. S48 is subject to Phosphoserine; by autocatalysis and BAK1. Residue T50 is modified to Phosphothreonine. Position 54 is a phosphoserine; by autocatalysis (S54). Phosphothreonine; by autocatalysis is present on T56. T64 is modified (phosphothreonine). The Protein kinase domain maps to 67-356 (FRPDSVIGEG…RALQQLQDNL (290 aa)). Phosphoserine; by autocatalysis and BAK1 is present on S71. An ATP-binding site is contributed by 73–81 (IGEGGFGCV). S89 carries the phosphoserine; by EFR modification. The Required for physical interaction with and phosphorylation of downstream signaling proteins (e.g. WRKY33, WRKY50, WRKY51 and WRKY57) to activate EFR-mediated immune signaling motif lies at 89–90 (ST). T90 is subject to Phosphothreonine; by EFR. K95 participates in a covalent cross-link: Glycyl lysine isopeptide (Lys-Gly) (interchain with G-Cter in ubiquitin). Position 105 (K105) interacts with ATP. The residue at position 120 (T120) is a Phosphothreonine; by EFR. S129 is subject to Phosphoserine; by autocatalysis. S129 is subject to Phosphoserine; by EFR. Y150 is modified (phosphotyrosine). Y168 bears the Phosphotyrosine; by autocatalysis mark. Residues K170 and K186 each participate in a glycyl lysine isopeptide (Lys-Gly) (interchain with G-Cter in ubiquitin) cross-link. S193 carries the phosphoserine modification. Residue D202 is the Proton acceptor of the active site. Phosphoserine; by autocatalysis and BAK1 is present on S206. Position 214 is a phosphotyrosine; by autocatalysis (Y214). Phosphoserine is present on S219. S233 carries the post-translational modification Phosphoserine; by autocatalysis. S236 carries the post-translational modification O-UMP-serine; by Xanthomonas campestris effector XopAC/AvrAC; alternate. Position 236 is a phosphoserine; by autocatalysis and BAK1; alternate (S236). An O-UMP-threonine; by Xanthomonas campestris effector XopAC/AvrAC; alternate modification is found at T237. T237 is modified (phosphothreonine; by autocatalysis and BAK1; alternate). T242 bears the Phosphothreonine; by autocatalysis and BAK1 mark. Y243 carries the post-translational modification Phosphotyrosine. Position 250 is a phosphotyrosine; by autocatalysis (Y250). A phosphoserine; by autocatalysis mark is found at S252 and S253. K286 is covalently cross-linked (Glycyl lysine isopeptide (Lys-Gly) (interchain with G-Cter in ubiquitin)). T314 bears the Phosphothreonine; by autocatalysis mark. Residue K337 forms a Glycyl lysine isopeptide (Lys-Gly) (interchain with G-Cter in ubiquitin) linkage. Phosphothreonine is present on T341. Positions 354–365 (DNLGKPSQTNPV) are enriched in polar residues. The tract at residues 354-395 (DNLGKPSQTNPVKDTKKLGFKTGTTKSSEKRFTQKPFGRHLV) is disordered. Residue K358 forms a Glycyl lysine isopeptide (Lys-Gly) (interchain with G-Cter in ubiquitin) linkage. A Phosphoserine; by autocatalysis and BAK1 modification is found at S360. T362 bears the Phosphothreonine; by autocatalysis and BAK1 mark. K366 is covalently cross-linked (Glycyl lysine isopeptide (Lys-Gly) (interchain with G-Cter in ubiquitin)). T368 is subject to Phosphothreonine; by autocatalysis and BAK1. T375 and T377 each carry phosphothreonine.

This sequence belongs to the protein kinase superfamily. Ser/Thr protein kinase family. Interacts with FLS2. Activation of FLS2 by flagellin (flg22) induces the dissociation of the complex. Interacts with BAK1. Interacts with the Xanthomonas campestris effector XopAC/AvrAC. Interacts with CPK28. Interacts with PEPR1. Interacts with PP2C38. Interacts with BRI1. Interacts with RBOHD. Binds to EFR when not phosphorylated at Ser-89 and Thr-90, in the absence of pathogen elicitor; dissociates upon pathogen-associated molecular pattern (PAMP)-triggered activation by EFR-mediated phosphorylation. Interacts directly with and phosphorylates WRKY transcription factors in the nucleus involved in the jasmonic acid (JA) and salicylic acid (SA) regulation (e.g. WRKY33, WRKY50, WRKY51 and WRKY57) to modulate defense hormones during plant immunity. Binds to ATL44/RHA3A and ATL45/RHA3B. Binds to SIK1 to be phosphorylated and stabilized. Post-translationally, phosphorylated by SIK1 to be stabilized. Phosphorylated by FLS2 and BAK1. Autophosphorylated. Autophosphorylation is reduced in presence of the Xanthomonas campestris effector XopAC/AvrAC. Phosphorylated, especially by EFR at Ser-89 and Thr-90, in response to the microbe-associated molecular pattern (MAMP) flg22. Phosphorylation in response to flg22 is abolished in presence of the Xanthomonas campestris effector XopAC/AvrAC. Phosphorylated at Ser-233, Ser-236 and Thr-237 by PEPR1. Phosphorylated at Tyr-150, Tyr-243 and Tyr-250. Tyrosine phosphorylation is required for BIK1 function in plant innate immunity. Uridylylated at Ser-236 and Thr-237 by the Xanthomonas campestris effector XopAC/AvrAC. This conceals conserved phosphorylation sites in the activation loop, reducing BIK1 kinase activity and consequently inhibiting downstream signaling. In terms of processing, monoubiquitinated by ATL44/RHA3A and ATL45/RHA3B following phosphorylation upon the recognition of microbe-associated molecular patterns (MAMPs, e.g. flg22) by pattern recognition receptors (PRRs), then released from the FLS2/BAK1 complex and internalized dynamically into endocytic compartments followed by the activation of immune signaling.

The protein localises to the cell membrane. It is found in the endosome membrane. Its subcellular location is the nucleus. It catalyses the reaction L-seryl-[protein] + ATP = O-phospho-L-seryl-[protein] + ADP + H(+). The catalysed reaction is L-threonyl-[protein] + ATP = O-phospho-L-threonyl-[protein] + ADP + H(+). Its activity is regulated as follows. Kinase activation is repressed by the phosphatase PP2C38. Functionally, plays a central role in immune responses. Required to activate the resistance responses to necrotrophic pathogens, including the regulation of defense hormone expression (e.g. jasmonic acid (JA) and salicylic acid (SA)). Phosphorylates FLS2 and BAK1. Involved in pathogen-associated molecular pattern (PAMP)-triggered immunity (PTI) signaling, including calcium signaling, and defense responses downstream of FLS2; upon PAMP recognition, first phosphorylated by FLS2 and SIK1 prior to being monoubiquitinated by ATL44/RHA3A and ATL45/RHA3B at the plasma membrane, then internalized dynamically into endocytic compartments together with FLS2. Acts additively with PBL1 in PTI defenses. Acts as a positive regulator of the PAMP flg22-induced increase of cytosolic calcium. Upon flg22 perception, phosphorylates and activates the calcium-permeable channel OSCA1.3, promoting stomatal closure. Phosphorylates the NADPH oxidase RBOHD at specific sites in a calcium-independent manner to enhance reactive oxygen species (ROS) generation upon flg22 perception. ROS production in response to flg22 controls stomatal movement and restriction of bacterial entry into leaf tissues. Seems not required for flg22-induced MAPK activation. Required for Pep1-induced defenses. Pep1 is an endogenous elicitor that potentiates PAMP-inducible plant responses. In association with PEPR1, acts downstream of the canonical ethylene signaling cascade to regulate ethylene responses. Involved in ethylene signaling. Destabilizes EIN3, the key transcription activator in ethylene signaling, and represses EIN3-dependent transcription. Acts as a negative regulator in brassinosteroid (BR) signaling. Functions in BR signaling by direct interaction with the BR receptor BRI1 cytosolic kinase domain. Required during SCOOP small peptides (e.g. SCOOP10 and SCOOP12) perception and signaling; receptor-like cytosolic kinases (RLCK) activated by BAK1/SERK3 and SERK4 coreceptors when associated with MIK2 upon the perception of SCOOP peptides. In terms of biological role, (Microbial infection) Xanthomonas campestris effector AvrAC/XopAC-mediated uridylylation prevents activation by phosphorylation at the same residues, thus affecting immune responses and reducing defense responses toward X.campestris, mediating avrAC/XopAC virulence functions. In Arabidopsis thaliana (Mouse-ear cress), this protein is Serine/threonine-protein kinase BIK1.